We begin with the raw amino-acid sequence, 515 residues long: NAD(P)H-quinone oxidoreductase subunit 2 (515 aa).

A run of 14 helical transmembrane segments spans residues T14–I34, W42–W62, L79–I99, L109–G128, L132–G151, L167–L187, L206–V226, P240–I260, W274–L294, M302–T322, L330–F350, L374–G394, I396–L416, and V462–F482.

The protein belongs to the complex I subunit 2 family. In terms of assembly, NDH-1 can be composed of about 15 different subunits; different subcomplexes with different compositions have been identified which probably have different functions.

It localises to the cellular thylakoid membrane. It catalyses the reaction a plastoquinone + NADH + (n+1) H(+)(in) = a plastoquinol + NAD(+) + n H(+)(out). It carries out the reaction a plastoquinone + NADPH + (n+1) H(+)(in) = a plastoquinol + NADP(+) + n H(+)(out). In terms of biological role, NDH-1 shuttles electrons from an unknown electron donor, via FMN and iron-sulfur (Fe-S) centers, to quinones in the respiratory and/or the photosynthetic chain. The immediate electron acceptor for the enzyme in this species is believed to be plastoquinone. Couples the redox reaction to proton translocation, and thus conserves the redox energy in a proton gradient. Cyanobacterial NDH-1 also plays a role in inorganic carbon-concentration. The polypeptide is NAD(P)H-quinone oxidoreductase subunit 2 (Thermosynechococcus vestitus (strain NIES-2133 / IAM M-273 / BP-1)).